Here is a 1208-residue protein sequence, read N- to C-terminus: Transient receptor potential cation channel subfamily M member 4 (1208 aa).

The Cytoplasmic portion of the chain corresponds to 1-776 (MVGQEKEQSW…SYFWGAPVTA (776 aa)). The ATP site is built by Arg-172, Arg-215, and Leu-226. Ca(2+) contacts are provided by Asp-271, Ala-393, Asp-396, and Glu-397. 2 residues coordinate ATP: Arg-422 and Gly-449. 2 positions are modified to phosphoserine: Ser-527 and Ser-538. The chain crosses the membrane as a helical span at residues 777-797 (FLGNVVSYLLFLLLFAHVLLV). Residues 798-808 (DFQPTKPGVFE) are Extracellular-facing. Residues 809–829 (LLLYFWAFTLLCEELRQGLGG) form a helical membrane-spanning segment. Positions 822 and 825 each coordinate Ca(2+). Topologically, residues 830-857 (GWGTLANGGPGPGKAPLRHRLHLYLLDT) are cytoplasmic. Residues 858–878 (WNQCDLLALTCFLLGVGCRLT) traverse the membrane as a helical segment. Ca(2+) is bound by residues Asn-859 and Asp-862. Residues 879-880 (PG) are Extracellular-facing. The helical transmembrane segment at 881–904 (LFDLGRTVLCLDFMIFTLRLLHIF) threads the bilayer. Residues 905–924 (TVNKQLGPKIVIVSKMMKDV) are Cytoplasmic-facing. Residues 925–945 (FFFLFFLCVWLVAYGVATEGI) traverse the membrane as a helical segment. Over 946–957 (LRPQDRSLPSIL) the chain is Extracellular. Positions 958–978 (RRVFYRPYLQIFGQIPQEEMD) form an intramembrane region, pore-forming. The Selectivity filter motif lies at 969–971 (FGQ). The Extracellular segment spans residues 979 to 1013 (VALMNPSNCSAERGSWAHPEGPVAGSCVSQYANWL). A disulfide bridge connects residues Cys-987 and Cys-1005. A helical transmembrane segment spans residues 1014 to 1034 (VVLLLIVFLLVANILLLNLLI). At 1035–1208 (AMFSYTFNKV…PPPSPTGSKD (174 aa)) the chain is on the cytoplasmic side. Positions 1070–1170 (APPLIIISHL…EYDRRLRGLE (101 aa)) are calmodulin-binding. Residues 1128-1180 (LAQARDKRDSDSERLKRTSQKVDTALKQLGQIREYDRRLRGLEREVQHCSRVL) are a coiled coil. Residues 1130–1135 (QARDKR) are mediates modulation by decavanadate and PIP2-binding. A phosphoserine; by PKC mark is found at Ser-1139 and Ser-1146. Residues 1189-1208 (HSALLPPGGPPPPSPTGSKD) form a disordered region. A compositionally biased stretch (pro residues) spans 1195–1208 (PGGPPPPSPTGSKD).

It belongs to the transient receptor (TC 1.A.4) family. LTrpC subfamily. TRPM4 sub-subfamily. Homotetramer. In terms of processing, phosphorylation by PKC leads to increase the sensitivity to Ca(2+). Sumoylated. Desumoylated by SENP1. In terms of tissue distribution, isoform 1 is highly expressed in the testis with a moderate expression in the brain, spleen and thymus. Isoform 2 is only expressed in the brain and spleen.

The protein localises to the cell membrane. It localises to the endoplasmic reticulum. The protein resides in the golgi apparatus. It carries out the reaction Na(+)(in) = Na(+)(out). It catalyses the reaction K(+)(in) = K(+)(out). Gating is voltage-dependent and repressed by decavanadate. Calmodulin-binding confers the Ca(2+) sensitivity. ATP is able to restore Ca(2+) sensitivity after desensitization. Phosphatidylinositol 4,5-bisphosphate (PIP2)-binding strongly enhances activity, by increasing the channel's Ca(2+) sensitivity and shifting its voltage dependence of activation towards negative potentials. Activity is also enhanced by 3,5-bis(trifluoromethyl)pyrazole derivative (BTP2). Exhibits pronounced temperature sensitivity, with activities strongly intensifying near physiological temperatures. TRPM4 can adopt distinct conformations at different temperatures, markedly influencing where and how ligands interact with them. Its function is as follows. Calcium-activated selective cation channel that mediates membrane depolarization. While it is activated by increase in intracellular Ca(2+), it is impermeable to it. Mediates transport of monovalent cations (Na(+) &gt; K(+) &gt; Cs(+) &gt; Li(+)), leading to depolarize the membrane. It thereby plays a central role in cadiomyocytes, neurons from entorhinal cortex, dorsal root and vomeronasal neurons, endocrine pancreas cells, kidney epithelial cells, cochlea hair cells etc. Participates in T-cell activation by modulating Ca(2+) oscillations after T lymphocyte activation, which is required for NFAT-dependent IL2 production. Involved in myogenic constriction of cerebral arteries. Controls insulin secretion in pancreatic beta-cells. May also be involved in pacemaking or could cause irregular electrical activity under conditions of Ca(2+) overload. Affects T-helper 1 (Th1) and T-helper 2 (Th2) cell motility and cytokine production through differential regulation of calcium signaling and NFATC1 localization. Enhances cell proliferation through up-regulation of the beta-catenin signaling pathway. Plays a role in keratinocyte differentiation. In terms of biological role, lacks channel activity. This chain is Transient receptor potential cation channel subfamily M member 4 (Trpm4), found in Rattus norvegicus (Rat).